The following is a 708-amino-acid chain: Leukotoxin translocation ATP-binding protein LktB (708 aa).

The Peptidase C39 domain maps to 1 to 126; it reads MEANHQRNDL…ACYQGQLILV (126 aa). In terms of domain architecture, ABC transmembrane type-1 spans 155–437; sequence FLETLIVSIF…LAQLWQDFQQ (283 aa). 5 consecutive transmembrane segments (helical) span residues 159–179, 192–212, 270–290, 296–316, and 389–409; these read LIVS…FQVV, LNII…LSGL, ALTS…MWYY, LVIL…SPIL, and VMVI…LSIG. Residues 469–704 enclose the ABC transporter domain; the sequence is ISFKNIRFRY…SNGLYSYLHQ (236 aa). ATP is bound at residue 503–510; that stretch reads GRSGSGKS.

The protein belongs to the ABC transporter superfamily. Protein-1 exporter (TC 3.A.1.109) family. As to quaternary structure, homodimer.

The protein resides in the cell inner membrane. The enzyme catalyses ATP + H2O + proteinSide 1 = ADP + phosphate + proteinSide 2.. Functionally, part of the ABC transporter complex LktBD involved in leukotoxin export. Transmembrane domains (TMD) form a pore in the inner membrane and the ATP-binding domain (NBD) is responsible for energy generation. The sequence is that of Leukotoxin translocation ATP-binding protein LktB (lktB) from Mannheimia haemolytica (Pasteurella haemolytica).